The primary structure comprises 178 residues: uncharacterized protein (178 aa).

5 consecutive transmembrane segments (helical) span residues 1–21 (MISI…YGGG), 47–67 (MLAL…AYVG), 75–95 (GFLI…IVLL), 117–137 (VIAV…IKAI), and 158–178 (MHPA…IPYL).

The protein belongs to the chromate ion transporter (CHR) (TC 2.A.51) family.

Its subcellular location is the cell membrane. This is an uncharacterized protein from Bacillus subtilis (strain 168).